Here is a 264-residue protein sequence, read N- to C-terminus: S-adenosylmethionine decarboxylase proenzyme (264 aa).

The active-site Schiff-base intermediate with substrate; via pyruvic acid is serine 113. Serine 113 is subject to Pyruvic acid (Ser); by autocatalysis. Histidine 118 (proton acceptor; for processing activity) is an active-site residue. The active-site Proton donor; for catalytic activity is the cysteine 141.

The protein belongs to the prokaryotic AdoMetDC family. Type 2 subfamily. As to quaternary structure, heterooctamer of four alpha and four beta chains arranged as a tetramer of alpha/beta heterodimers. Pyruvate serves as cofactor. Is synthesized initially as an inactive proenzyme. Formation of the active enzyme involves a self-maturation process in which the active site pyruvoyl group is generated from an internal serine residue via an autocatalytic post-translational modification. Two non-identical subunits are generated from the proenzyme in this reaction, and the pyruvate is formed at the N-terminus of the alpha chain, which is derived from the carboxyl end of the proenzyme. The post-translation cleavage follows an unusual pathway, termed non-hydrolytic serinolysis, in which the side chain hydroxyl group of the serine supplies its oxygen atom to form the C-terminus of the beta chain, while the remainder of the serine residue undergoes an oxidative deamination to produce ammonia and the pyruvoyl group blocking the N-terminus of the alpha chain.

It catalyses the reaction S-adenosyl-L-methionine + H(+) = S-adenosyl 3-(methylsulfanyl)propylamine + CO2. Its pathway is amine and polyamine biosynthesis; S-adenosylmethioninamine biosynthesis; S-adenosylmethioninamine from S-adenosyl-L-methionine: step 1/1. Catalyzes the decarboxylation of S-adenosylmethionine to S-adenosylmethioninamine (dcAdoMet), the propylamine donor required for the synthesis of the polyamines spermine and spermidine from the diamine putrescine. This Xanthomonas campestris pv. campestris (strain B100) protein is S-adenosylmethionine decarboxylase proenzyme.